Here is a 341-residue protein sequence, read N- to C-terminus: B3 domain-containing transcription factor VRN1 (341 aa).

The TF-B3 1 DNA-binding region spans 5-98 (FFHKLIFSST…AFSVYIFNLS (94 aa)). The segment at 166–223 (GPVKAEEPTPTPKIPKKRGRKKKNADPEEINSSAPRDDDPENRSKFYESASARKRTVT) is disordered. The span at 179-188 (IPKKRGRKKK) shows a compositional bias: basic residues. A compositionally biased stretch (basic and acidic residues) spans 200–211 (PRDDDPENRSKF). The segment at residues 244–338 (FRVVLRPSYL…VLKVTAFRVN (95 aa)) is a DNA-binding region (TF-B3 2).

As to expression, expressed in roots and at lower levels in aerial parts.

It is found in the nucleus. Functionally, essential protein. Involved in the regulation of vernalization. Acts as a transcriptional repressor of FLC, a major target of the vernalization pathway. Binds DNA in vitro in a non-sequence-specific manner. The protein is B3 domain-containing transcription factor VRN1 of Arabidopsis thaliana (Mouse-ear cress).